We begin with the raw amino-acid sequence, 563 residues long: Arginine--tRNA ligase (563 aa).

The 'HIGH' region motif lies at 119–129; sequence ANPTGPLHVGR.

The protein belongs to the class-I aminoacyl-tRNA synthetase family.

The protein localises to the cytoplasm. The enzyme catalyses tRNA(Arg) + L-arginine + ATP = L-arginyl-tRNA(Arg) + AMP + diphosphate. The sequence is that of Arginine--tRNA ligase from Methanocella arvoryzae (strain DSM 22066 / NBRC 105507 / MRE50).